The sequence spans 218 residues: MGRVFLTGEKANSVLKRYPRANGFFEEIRQGNIERECKEEFCTFEEAREAFENNEKTKEFWSTYTKAQQGESNRGSDWFQFYLTFPLIFGLFIILLVIFLIWRCFLRNKTRRQTVTEGHIPFPQHLNIITPPPPPDEVFDSSGLSPGFLGYVVGRSDSVSTRLSNCDPPPTYEEATGQVNLQRSETEPHLDPPPEYEDIVNSNSASAIPMVPVVTTIK.

Positions 1 to 20 (MGRVFLTGEKANSVLKRYPR) are excised as a propeptide. In terms of domain architecture, Gla spans 20-66 (RANGFFEEIRQGNIERECKEEFCTFEEAREAFENNEKTKEFWSTYTK). Over 21 to 80 (ANGFFEEIRQGNIERECKEEFCTFEEAREAFENNEKTKEFWSTYTKAQQGESNRGSDWFQ) the chain is Extracellular. Cys37 and Cys42 form a disulfide bridge. Residues 81–101 (FYLTFPLIFGLFIILLVIFLI) traverse the membrane as a helical segment. At 102-218 (WRCFLRNKTR…PMVPVVTTIK (117 aa)) the chain is on the cytoplasmic side. The segment at 161-195 (TRLSNCDPPPTYEEATGQVNLQRSETEPHLDPPPE) is disordered.

In terms of processing, gla residues are produced after subsequent post-translational modifications of glutamate by a vitamin K-dependent gamma-carboxylase.

The protein localises to the membrane. The chain is Transmembrane gamma-carboxyglutamic acid protein 1 (PRRG1) from Pongo abelii (Sumatran orangutan).